Consider the following 440-residue polypeptide: Thymidine phosphorylase (440 aa).

The protein belongs to the thymidine/pyrimidine-nucleoside phosphorylase family. Homodimer.

It catalyses the reaction thymidine + phosphate = 2-deoxy-alpha-D-ribose 1-phosphate + thymine. It functions in the pathway pyrimidine metabolism; dTMP biosynthesis via salvage pathway; dTMP from thymine: step 1/2. The enzymes which catalyze the reversible phosphorolysis of pyrimidine nucleosides are involved in the degradation of these compounds and in their utilization as carbon and energy sources, or in the rescue of pyrimidine bases for nucleotide synthesis. This chain is Thymidine phosphorylase, found in Burkholderia pseudomallei (strain K96243).